Here is a 449-residue protein sequence, read N- to C-terminus: Glucose-6-phosphate isomerase (449 aa).

E291 serves as the catalytic Proton donor. Residues H312 and K426 contribute to the active site.

The protein belongs to the GPI family.

It is found in the cytoplasm. It catalyses the reaction alpha-D-glucose 6-phosphate = beta-D-fructose 6-phosphate. It participates in carbohydrate biosynthesis; gluconeogenesis. The protein operates within carbohydrate degradation; glycolysis; D-glyceraldehyde 3-phosphate and glycerone phosphate from D-glucose: step 2/4. Functionally, catalyzes the reversible isomerization of glucose-6-phosphate to fructose-6-phosphate. The protein is Glucose-6-phosphate isomerase of Streptococcus mutans serotype c (strain ATCC 700610 / UA159).